Reading from the N-terminus, the 486-residue chain is Hematopoietic lineage cell-specific protein (486 aa).

Residues 27 to 66 are involved in HAX-1 binding; sequence FVNDISEKEQRWGAKTIEGSGRTEHINIHQLRNKVSEEHD. The residue at position 41 (lysine 41) is an N6-acetyllysine. 3 Cortactin repeats span residues 79 to 115, 116 to 152, and 153 to 189; these read ASHGYGGRFGVERDRMDKSAVGHEYVAEVEKHSSQTD, AAKGFGGKYGVERDRADKSAVGFDYKGEVEKHTSQKD, and YSRGFGGRYGVEKDKWDKAALGYDYKGETEKHESQRD. Position 123 is an N6-acetyllysine (lysine 123). Tyrosine 140 carries the phosphotyrosine modification. One copy of the Cortactin 4; truncated repeat lies at 190–212; the sequence is YAKGFGGQYGIQKDRVDKSAVGF. Lysine 192 is modified (N6-acetyllysine). The residue at position 198 (tyrosine 198) is a Phosphotyrosine. Position 222 is a phosphotyrosine; by FGR (tyrosine 222). An N6-acetyllysine modification is found at lysine 241. Positions 243–276 are enriched in basic and acidic residues; the sequence is ESMAEEKRKREEEEKAQQVARRQQERKAVTKRSP. Positions 243–419 are disordered; the sequence is ESMAEEKRKR…SALAGSSGCP (177 aa). At serine 275 the chain carries Phosphoserine. At threonine 308 the chain carries Phosphothreonine. The span at 315 to 324 shows a compositional bias: basic and acidic residues; sequence EPVRTSREHP. Acidic residues-rich tracts occupy residues 353 to 383 and 390 to 405; these read QVEEEPVYEAEPEPEPEPEPEPENDYEDVEE and EDEPEGDYEEVLEPED. Phosphotyrosine; by SYK and FES occurs at positions 378 and 397. Low complexity predominate over residues 406–419; that stretch reads SSFSSALAGSSGCP. The SH3 domain occupies 428–486; that stretch reads ALGISAVAVYDYQGEGSDELSFDPDDVITDIEMVDEGWWRGRCHGHFGLFPANYVKLLE.

As to quaternary structure, associates with the SH2 and SH3 domains of LCK. Binding to he LCK SH3 domain occurs constitutively, while binding to the LCK SH2 domain occurs only upon TCR stimulation. A similar binding pattern was observed with LYN, but not with FYN in which the FYN SH2 region associates upon TCR stimulation but the FYN SH3 region does not associate regardless of TCR stimulation. Directly associates with HAX1, through binding to its C-terminal region. Interacts with HS1BP3. Interacts with FES/FPS. Interacts (via SH2 domain) with FGR. Forms a multiprotein complex with LYN and ANKRD54. Post-translationally, phosphorylated by FES. Phosphorylated by LYN, FYN and FGR after cross-linking of surface IgM on B-cells. Phosphorylation by LYN, FYN and FGR requires prior phosphorylation by SYK or FES. In terms of tissue distribution, expressed only in tissues and cells of hematopoietic origin.

The protein localises to the membrane. It is found in the cytoplasm. It localises to the mitochondrion. Its function is as follows. Substrate of the antigen receptor-coupled tyrosine kinase. Plays a role in antigen receptor signaling for both clonal expansion and deletion in lymphoid cells. May also be involved in the regulation of gene expression. The chain is Hematopoietic lineage cell-specific protein (HCLS1) from Homo sapiens (Human).